Reading from the N-terminus, the 807-residue chain is Glycerol-3-phosphate acyltransferase (807 aa).

Residues 308-313 carry the HXXXXD motif motif; that stretch reads CHRSHM.

Belongs to the GPAT/DAPAT family.

It localises to the cell inner membrane. It carries out the reaction sn-glycerol 3-phosphate + an acyl-CoA = a 1-acyl-sn-glycero-3-phosphate + CoA. It functions in the pathway phospholipid metabolism; CDP-diacylglycerol biosynthesis; CDP-diacylglycerol from sn-glycerol 3-phosphate: step 1/3. The chain is Glycerol-3-phosphate acyltransferase from Shewanella pealeana (strain ATCC 700345 / ANG-SQ1).